A 628-amino-acid chain; its full sequence is UvrABC system protein C (628 aa).

Residues 20–99 form the GIY-YIG domain; the sequence is TSAGVYLMRD…IKTHKPRYNV (80 aa). One can recognise a UVR domain in the interval 209-244; that stretch reads AELLAQLEDQMQTAAAAMNFEHAARLRDRITGLNQL.

This sequence belongs to the UvrC family. In terms of assembly, interacts with UvrB in an incision complex.

The protein localises to the cytoplasm. The UvrABC repair system catalyzes the recognition and processing of DNA lesions. UvrC both incises the 5' and 3' sides of the lesion. The N-terminal half is responsible for the 3' incision and the C-terminal half is responsible for the 5' incision. The polypeptide is UvrABC system protein C (Gloeobacter violaceus (strain ATCC 29082 / PCC 7421)).